The chain runs to 550 residues: Eukaryotic translation initiation factor 3 subunit L (550 aa).

Residues 1–20 are disordered; sequence MVRDSFDGGHTGDPERDLAY. The PCI domain maps to 309 to 503; sequence EATKIFVNCL…IDDSTTDLDF (195 aa).

Belongs to the eIF-3 subunit L family. As to quaternary structure, component of the eukaryotic translation initiation factor 3 (eIF-3) complex.

The protein localises to the cytoplasm. Component of the eukaryotic translation initiation factor 3 (eIF-3) complex, which is involved in protein synthesis of a specialized repertoire of mRNAs and, together with other initiation factors, stimulates binding of mRNA and methionyl-tRNAi to the 40S ribosome. The eIF-3 complex specifically targets and initiates translation of a subset of mRNAs involved in cell proliferation. This is Eukaryotic translation initiation factor 3 subunit L from Brugia malayi (Filarial nematode worm).